Consider the following 184-residue polypeptide: Jacalin-related lectin 2 (184 aa).

A Jacalin-type lectin domain is found at 4–163 (KIKIGPVGTD…LQNIGVYLQP (160 aa)).

Belongs to the jacalin lectin family.

The chain is Jacalin-related lectin 2 (JAL2) from Arabidopsis thaliana (Mouse-ear cress).